We begin with the raw amino-acid sequence, 138 residues long: ATP synthase epsilon chain (138 aa).

Belongs to the ATPase epsilon chain family. In terms of assembly, F-type ATPases have 2 components, CF(1) - the catalytic core - and CF(0) - the membrane proton channel. CF(1) has five subunits: alpha(3), beta(3), gamma(1), delta(1), epsilon(1). CF(0) has three main subunits: a, b and c.

It localises to the cell inner membrane. Produces ATP from ADP in the presence of a proton gradient across the membrane. In Wigglesworthia glossinidia brevipalpis, this protein is ATP synthase epsilon chain.